Reading from the N-terminus, the 164-residue chain is FMN reductase (NADH) RutF (164 aa).

The protein belongs to the non-flavoprotein flavin reductase family. RutF subfamily.

It carries out the reaction FMNH2 + NAD(+) = FMN + NADH + 2 H(+). In terms of biological role, catalyzes the reduction of FMN to FMNH2 which is used to reduce pyrimidine by RutA via the Rut pathway. This is FMN reductase (NADH) RutF from Escherichia coli O45:K1 (strain S88 / ExPEC).